The following is a 455-amino-acid chain: uncharacterized protein (455 aa).

A signal peptide spans 1–27; it reads MSQRQQFQFLLSFLILIFLKFIIQIRC. The Extracellular segment spans residues 29–434; it reads ESNGVIIIKN…GDDENLINSS (406 aa). Residues N136, N148, N210, and N298 are each glycosylated (N-linked (GlcNAc...) asparagine). The disordered stretch occupies residues 383–402; it reads SSSTTSTTSSSSSSSSSTTT. Residues N421 and N432 are each glycosylated (N-linked (GlcNAc...) asparagine). Residues 435–455 traverse the membrane as a helical segment; it reads SVIKFSTPIIMIIIILINIKF.

It is found in the membrane. This is an uncharacterized protein from Dictyostelium discoideum (Social amoeba).